A 92-amino-acid chain; its full sequence is Cell division protein FtsB (92 aa).

The Cytoplasmic portion of the chain corresponds to 1-3; that stretch reads MKV. A helical transmembrane segment spans residues 4–21; it reads VPILLFVLLAALQYRLWF. The Periplasmic segment spans residues 22 to 92; that stretch reads GKNSIPEYVA…TFYRILPSEE (71 aa). A coiled-coil region spans residues 31–74; it reads AMEKSVAEQAEQNTELLQRNNLLKADIQDLKVGLEAVEERARNE.

It belongs to the FtsB family. In terms of assembly, part of a complex composed of FtsB, FtsL and FtsQ.

Its subcellular location is the cell inner membrane. Functionally, essential cell division protein. May link together the upstream cell division proteins, which are predominantly cytoplasmic, with the downstream cell division proteins, which are predominantly periplasmic. The polypeptide is Cell division protein FtsB (Pseudoalteromonas atlantica (strain T6c / ATCC BAA-1087)).